The following is a 276-amino-acid chain: 4-deoxy-L-threo-5-hexosulose-uronate ketol-isomerase (276 aa).

Residues His-194, His-196, Glu-201, and His-243 each contribute to the Zn(2+) site.

It belongs to the KduI family. Requires Zn(2+) as cofactor.

It catalyses the reaction 5-dehydro-4-deoxy-D-glucuronate = 3-deoxy-D-glycero-2,5-hexodiulosonate. It functions in the pathway glycan metabolism; pectin degradation; 2-dehydro-3-deoxy-D-gluconate from pectin: step 4/5. Catalyzes the isomerization of 5-dehydro-4-deoxy-D-glucuronate to 3-deoxy-D-glycero-2,5-hexodiulosonate. The chain is 4-deoxy-L-threo-5-hexosulose-uronate ketol-isomerase from Caldicellulosiruptor bescii (strain ATCC BAA-1888 / DSM 6725 / KCTC 15123 / Z-1320) (Anaerocellum thermophilum).